Reading from the N-terminus, the 300-residue chain is DNA packaging protein OPG160 (300 aa).

Belongs to the orthopoxvirus OPG160 protein family. In terms of assembly, interacts with protein OPG137.

Functionally, participates in viral DNA packaging and virion morphogenesis. This chain is DNA packaging protein OPG160 (OPG160), found in Monkeypox virus.